A 74-amino-acid chain; its full sequence is Conotoxin TsMLCL-04 (74 aa).

An N-terminal signal peptide occupies residues 1–19; sequence MLCLPVFIILLLLASPAAP. Positions 20-60 are excised as a propeptide; that stretch reads NPLETRIQRDLIRAALEDADMKTNERFLEGVISTIKDFAGK.

The protein belongs to the conotoxin T superfamily. Contains 2 disulfide bonds that can be either 'C1-C3, C2-C4' or 'C1-C4, C2-C3', since these disulfide connectivities have been observed for conotoxins with cysteine framework V (for examples, see AC P0DQQ7 and AC P81755). In terms of tissue distribution, expressed by the venom duct.

It localises to the secreted. This chain is Conotoxin TsMLCL-04, found in Conus tessulatus (Tessellate cone).